The following is a 911-amino-acid chain: DNA ligase 4 (911 aa).

Positions 271, 272, 273, 274, 278, 331, 345, 367, 427, 432, 449, and 451 each coordinate ATP. Lys273 functions as the N6-AMP-lysine intermediate in the catalytic mechanism. A Mg(2+)-binding site is contributed by Glu331. A Mg(2+)-binding site is contributed by Glu427. Residues 610–620 (LASKHFYVGGD) form a required for catalytic activity region. BRCT domains follow at residues 654-743 (KISN…PHFM) and 808-911 (SPLS…QYLI).

This sequence belongs to the ATP-dependent DNA ligase family. Interacts with XRCC4; the LIG4-XRCC4 subcomplex has a 1:2 stoichiometry and XRCC4 is required for LIG4 stability. Component of the core long-range non-homologous end joining (NHEJ) complex (also named DNA-PK complex) composed of PRKDC, LIG4, XRCC4, XRCC6/Ku70, XRCC5/Ku86 and NHEJ1/XLF. Additional component of the NHEJ complex includes PAXX. Following autophosphorylation, PRKDC dissociates from DNA, leading to formation of the short-range NHEJ complex, composed of LIG4, XRCC4, XRCC6/Ku70, XRCC5/Ku86 and NHEJ1/XLF. Interacts with DCLRE1C; the interaction is direct. Interacts with APLF. It depends on Mg(2+) as a cofactor.

It localises to the nucleus. The enzyme catalyses ATP + (deoxyribonucleotide)n-3'-hydroxyl + 5'-phospho-(deoxyribonucleotide)m = (deoxyribonucleotide)n+m + AMP + diphosphate.. DNA ligase involved in DNA non-homologous end joining (NHEJ); required for double-strand break (DSB) repair and V(D)J recombination. Catalyzes the NHEJ ligation step of the broken DNA during DSB repair by resealing the DNA breaks after the gap filling is completed. Joins single-strand breaks in a double-stranded polydeoxynucleotide in an ATP-dependent reaction. LIG4 is mechanistically flexible: it can ligate nicks as well as compatible DNA overhangs alone, while in the presence of XRCC4, it can ligate ends with 2-nucleotides (nt) microhomology and 1-nt gaps. Forms a subcomplex with XRCC4; the LIG4-XRCC4 subcomplex is responsible for the NHEJ ligation step and XRCC4 enhances the joining activity of LIG4. Binding of the LIG4-XRCC4 complex to DNA ends is dependent on the assembly of the DNA-dependent protein kinase complex DNA-PK to these DNA ends. LIG4 regulates nuclear localization of XRCC4. The protein is DNA ligase 4 of Pongo abelii (Sumatran orangutan).